Consider the following 231-residue polypeptide: tRNA (guanine-N(7)-)-methyltransferase (231 aa).

S-adenosyl-L-methionine is bound by residues Asp-57, Glu-82, Asp-109, and Asp-132. Asp-132 is an active-site residue. Residues Lys-136, Asp-168, and 205–208 (TKFE) contribute to the substrate site. Positions 194–214 (AFVPPPPPRPQTKFERRGLRK) are disordered.

This sequence belongs to the class I-like SAM-binding methyltransferase superfamily. TrmB family.

The enzyme catalyses guanosine(46) in tRNA + S-adenosyl-L-methionine = N(7)-methylguanosine(46) in tRNA + S-adenosyl-L-homocysteine. The protein operates within tRNA modification; N(7)-methylguanine-tRNA biosynthesis. Functionally, catalyzes the formation of N(7)-methylguanine at position 46 (m7G46) in tRNA. The sequence is that of tRNA (guanine-N(7)-)-methyltransferase from Halorhodospira halophila (strain DSM 244 / SL1) (Ectothiorhodospira halophila (strain DSM 244 / SL1)).